The following is a 268-amino-acid chain: Probable 6-phosphogluconolactonase 1 (268 aa).

Belongs to the glucosamine/galactosamine-6-phosphate isomerase family. 6-phosphogluconolactonase subfamily.

It localises to the cytoplasm. Its subcellular location is the cytosol. The catalysed reaction is 6-phospho-D-glucono-1,5-lactone + H2O = 6-phospho-D-gluconate + H(+). Its pathway is carbohydrate degradation; pentose phosphate pathway; D-ribulose 5-phosphate from D-glucose 6-phosphate (oxidative stage): step 2/3. Catalyzes the hydrolysis of 6-phosphogluconolactone to 6-phosphogluconate. The protein is Probable 6-phosphogluconolactonase 1 of Arabidopsis thaliana (Mouse-ear cress).